We begin with the raw amino-acid sequence, 123 residues long: Small ribosomal subunit protein uS12cz/uS12cy (123 aa).

This sequence belongs to the universal ribosomal protein uS12 family. As to quaternary structure, part of the 30S ribosomal subunit.

It is found in the plastid. It localises to the chloroplast. With S4 and S5 plays an important role in translational accuracy. Located at the interface of the 30S and 50S subunits. In Daucus carota (Wild carrot), this protein is Small ribosomal subunit protein uS12cz/uS12cy (rps12-A).